A 256-amino-acid polypeptide reads, in one-letter code: MLWQKPTAPEQAPAPARPYQGVRVKEPVKELLRRKRGHASSGAAPAPTAVVLPHQPLATYTTVGPSCLDMEGSVSAVTEEAALCAGWLSQPTPATLQPLAPWTPYTEYVPHEAVSCPYSADMYVQPVCPSYTVVGPSSVLTYASPPLITNVTTRSSATPAVGPPLEGPEHQAPLTYFPWPQPLSTLPTSTLQYQPPAPALPGPQFVQLPISIPEPVLQDMEDPRRAASSLTIDKLLLEEEDSDAYALNHTLSVEGF.

Residues 1–23 (MLWQKPTAPEQAPAPARPYQGVR) are disordered. An OCA domain is found at 16–38 (ARPYQGVRVKEPVKELLRRKRGH).

The protein belongs to the POU2AF family. In terms of assembly, interacts with POU2F1/OCT1 and POU2F2/OCT2; the interaction increases POU2F1 and POU2F2 transactivation activity. In terms of processing, ubiquitinated; mediated by SIAH1 or SIAH2 and leading to its subsequent proteasomal degradation. B-cell specific. Detected in mainly in spleen, but also in thymus, periphral blood leukocyte and small intestine.

The protein resides in the nucleus. Transcriptional coactivator that specifically associates with either POU2F1/OCT1 or POU2F2/OCT2. It boosts the POU2F1/OCT1 mediated promoter activity and to a lesser extent, that of POU2F2/OCT2. It recognizes the POU domains of POU2F1/OCT1 and POU2F2/OCT2. It is essential for the response of B-cells to antigens and required for the formation of germinal centers. Regulates IL6 expression in B cells as POU2F2/OCT2 coactivator. The polypeptide is POU domain class 2-associating factor 1 (Homo sapiens (Human)).